The following is a 1934-amino-acid chain: Tudor domain-containing protein 15 (1934 aa).

Tudor domains follow at residues 59–117 (NVEI…LFEL), 289–347 (CDNF…FILV), 531–589 (KPEP…FCEL), 799–856 (PYEI…FLLL), 1011–1070 (DSNK…FPEL), and 1342–1401 (KPLV…FLTV). Positions 1490–1510 (VRPGDNEMKKGKSNESEGSMN) are disordered. The span at 1491-1504 (RPGDNEMKKGKSNE) shows a compositional bias: basic and acidic residues. Tudor domains lie at 1574–1633 (SIEK…IRNI) and 1780–1838 (FIIP…PEEL).

The chain is Tudor domain-containing protein 15 (TDRD15) from Homo sapiens (Human).